A 366-amino-acid chain; its full sequence is 3-dehydroquinate synthase (366 aa).

Residues 75–80, 109–113, 133–134, K146, K155, and 173–176 each bind NAD(+); these read DGEEYK, GVVGD, TT, and TLDT. Positions 188, 251, and 268 each coordinate Zn(2+).

It belongs to the sugar phosphate cyclases superfamily. Dehydroquinate synthase family. Requires Co(2+) as cofactor. It depends on Zn(2+) as a cofactor. NAD(+) is required as a cofactor.

The protein resides in the cytoplasm. It catalyses the reaction 7-phospho-2-dehydro-3-deoxy-D-arabino-heptonate = 3-dehydroquinate + phosphate. It participates in metabolic intermediate biosynthesis; chorismate biosynthesis; chorismate from D-erythrose 4-phosphate and phosphoenolpyruvate: step 2/7. Catalyzes the conversion of 3-deoxy-D-arabino-heptulosonate 7-phosphate (DAHP) to dehydroquinate (DHQ). The chain is 3-dehydroquinate synthase from Nitrosospira multiformis (strain ATCC 25196 / NCIMB 11849 / C 71).